Reading from the N-terminus, the 299-residue chain is Serpentine receptor class gamma-30 (299 aa).

Helical transmembrane passes span 18–38, 59–79, 98–118, 137–157, 189–209, 223–243, and 260–280; these read GIQF…IKVL, ILSV…NYIP, ILFI…FMVV, IIPH…WTAF, IISS…MLCI, LTAS…MNIY, and ALTA…MLCL.

It belongs to the nematode receptor-like protein srg family.

It is found in the membrane. This is Serpentine receptor class gamma-30 (srg-30) from Caenorhabditis elegans.